The primary structure comprises 714 residues: Polyribonucleotide nucleotidyltransferase (714 aa).

2 residues coordinate Mg(2+): Asp-493 and Asp-499. The KH domain maps to 559–618; sequence PRIETTKIPADRIGELIGPGGKNIKAIQAESGADINIEEDGTVHIYAAKQEGLDRALELV. In terms of domain architecture, S1 motif spans 628–696; it reads GELYTGKIVS…DKGRVKMSIR (69 aa).

The protein belongs to the polyribonucleotide nucleotidyltransferase family. Mg(2+) is required as a cofactor.

Its subcellular location is the cytoplasm. It catalyses the reaction RNA(n+1) + phosphate = RNA(n) + a ribonucleoside 5'-diphosphate. Functionally, involved in mRNA degradation. Catalyzes the phosphorolysis of single-stranded polyribonucleotides processively in the 3'- to 5'-direction. This is Polyribonucleotide nucleotidyltransferase from Akkermansia muciniphila (strain ATCC BAA-835 / DSM 22959 / JCM 33894 / BCRC 81048 / CCUG 64013 / CIP 107961 / Muc).